Reading from the N-terminus, the 123-residue chain is uncharacterized protein (123 aa).

A disordered region spans residues 76 to 97 (ENNKRKKKSEGERVRSPRTFRG).

This is an uncharacterized protein from Saccharomyces cerevisiae (strain ATCC 204508 / S288c) (Baker's yeast).